Here is an 875-residue protein sequence, read N- to C-terminus: Probable serine/threonine-protein kinase samkC (875 aa).

Positions Met1 to Asp12 are enriched in polar residues. A disordered region spans residues Met1–Asn47. A compositionally biased stretch (low complexity) spans Asn13–Asn45. The SAM domain maps to Trp51–Phe116. The stretch at Asp135–Asn162 forms a coiled coil. Residues Asn136 to Asn168 show a composition bias toward low complexity. The disordered stretch occupies residues Asn136–Thr170. The Protein kinase domain maps to Tyr181 to Phe452. ATP contacts are provided by residues Met187 to Leu195 and Lys210. The active-site Proton acceptor is the Asp301. Disordered stretches follow at residues Asn331 to Asn362 and Ser461 to Asn718. Positions Pro474–Ser554 are enriched in low complexity. The segment covering Glu555–Lys564 has biased composition (pro residues). Low complexity-rich tracts occupy residues Pro565–Ser581, Gln589–Thr611, and Gln617–Lys653. Residues Gln626–Lys655 are a coiled coil. Over residues Ser654–Pro663 the composition is skewed to basic and acidic residues. Low complexity predominate over residues Glu664–Asn718. The chain crosses the membrane as a helical span at residues Thr842–Leu862.

It belongs to the protein kinase superfamily. Ser/Thr protein kinase family.

It is found in the membrane. It catalyses the reaction L-seryl-[protein] + ATP = O-phospho-L-seryl-[protein] + ADP + H(+). The enzyme catalyses L-threonyl-[protein] + ATP = O-phospho-L-threonyl-[protein] + ADP + H(+). In Dictyostelium discoideum (Social amoeba), this protein is Probable serine/threonine-protein kinase samkC (samkC).